A 339-amino-acid polypeptide reads, in one-letter code: MKDSLVLLSRILAHPDSRCWFLAWNPAGTLLASCGGDRSVRIWGREGDSWICKSVLCEGHQRTVRKVAWSPCGNYLASASFDATTCIWKKNEDDFECVTTLEGHENEVKSVAWAPSGNLLATCSRDKSVWVWEVDEEDEYECVSVLNSHTQDVKHVVWHPSQELLASASYDDTVKLYREEEDDWVCCATLEGHESTVWSLAFDPSGQRLASCSDDRTVRIWRQYLPGNEQGVACSGSEASWKCVCTLSGFHSRTIYDVAWCQLTGTLATACGDDAIRVFEEDPGSDPQQPTFSLTAHVPQAHSQDVNCVAWNPKERGLLASCSDDGELAFWKYQPSEGI.

WD repeat units follow at residues 14–53 (HPDS…WICK), 59–98 (GHQR…FECV), 103–142 (GHEN…EYEC), 148–187 (SHTQ…WVCC), 192–231 (GHES…NEQG), 250–289 (FHSR…DPQQ), and 301–339 (AHSQ…SEGI). The LYR motif; required for interaction with HSC20 signature appears at 176–178 (LYR).

This sequence belongs to the WD repeat CIA1 family. As to quaternary structure, component of the CIA complex. Interacts with CIAO2A and forms a complex with CIAO2B and MMS19; the interactions with CIAO2A and CIAO2B are mutually exclusive. Interacts with CHD1L, ERCC2, IREB2 and POLD1. Component of the MMXD complex, which includes CIAO1, ERCC2, CIAO2B, MMS19 and SLC25A5. Interacts with WT1. Interacts with CIAO3. Interacts (via LYR motif) with HSC20.

Its subcellular location is the cytoplasm. Its function is as follows. Key component of the cytosolic iron-sulfur protein assembly (CIA) complex, a multiprotein complex that mediates the incorporation of iron-sulfur cluster into extramitochondrial Fe/S proteins. As a CIA complex component, interacts specifically with CIAO2A or CIAO2B and MMS19 to assist different branches of iron-sulfur protein assembly, depending of its interactors. The complex CIAO1:CIAO2B:MMS19 binds to and facilitates the assembly of most cytosolic-nuclear Fe/S proteins. CIAO1:CIAO2A specifically matures ACO1 and stabilizes IREB2. Seems to specifically modulate the transactivation activity of WT1. As part of the mitotic spindle-associated MMXD complex it may play a role in chromosome segregation. This Bos taurus (Bovine) protein is Probable cytosolic iron-sulfur protein assembly protein CIAO1.